We begin with the raw amino-acid sequence, 338 residues long: Nicotinate-nucleotide--dimethylbenzimidazole phosphoribosyltransferase (338 aa).

The Proton acceptor role is filled by E305.

Belongs to the CobT family. Homodimer.

It carries out the reaction 5,6-dimethylbenzimidazole + nicotinate beta-D-ribonucleotide = alpha-ribazole 5'-phosphate + nicotinate + H(+). It participates in nucleoside biosynthesis; alpha-ribazole biosynthesis; alpha-ribazole from 5,6-dimethylbenzimidazole: step 1/2. Catalyzes the synthesis of alpha-ribazole-5'-phosphate from nicotinate mononucleotide (NAMN) and 5,6-dimethylbenzimidazole (DMB). The sequence is that of Nicotinate-nucleotide--dimethylbenzimidazole phosphoribosyltransferase (cobU) from Sinorhizobium sp.